The sequence spans 364 residues: Aminomethyltransferase (364 aa).

This sequence belongs to the GcvT family. The glycine cleavage system is composed of four proteins: P, T, L and H.

It carries out the reaction N(6)-[(R)-S(8)-aminomethyldihydrolipoyl]-L-lysyl-[protein] + (6S)-5,6,7,8-tetrahydrofolate = N(6)-[(R)-dihydrolipoyl]-L-lysyl-[protein] + (6R)-5,10-methylene-5,6,7,8-tetrahydrofolate + NH4(+). Functionally, the glycine cleavage system catalyzes the degradation of glycine. This Salmonella paratyphi A (strain AKU_12601) protein is Aminomethyltransferase.